The sequence spans 354 residues: Serine/threonine-protein phosphatase 2A activator 2 (354 aa).

The protein belongs to the PTPA-type PPIase family.

The protein resides in the cytoplasm. It catalyses the reaction [protein]-peptidylproline (omega=180) = [protein]-peptidylproline (omega=0). In terms of biological role, PPIases accelerate the folding of proteins. It catalyzes the cis-trans isomerization of proline imidic peptide bonds in oligopeptides. Acts as a regulatory subunit for PP2A-like phosphatases modulating their activity or substrate specificity, probably by inducing a conformational change in the catalytic subunit, a direct target of the PPIase. Can reactivate inactive phosphatase PP2A-phosphatase methylesterase complexes (PP2Ai) in presence of ATP and Mg(2+) by dissociating the inactive form from the complex. In Yarrowia lipolytica (strain CLIB 122 / E 150) (Yeast), this protein is Serine/threonine-protein phosphatase 2A activator 2 (RRD2).